The sequence spans 293 residues: tRNA pseudouridine synthase B (293 aa).

D38 serves as the catalytic Nucleophile.

This sequence belongs to the pseudouridine synthase TruB family. Type 1 subfamily.

It catalyses the reaction uridine(55) in tRNA = pseudouridine(55) in tRNA. Responsible for synthesis of pseudouridine from uracil-55 in the psi GC loop of transfer RNAs. The sequence is that of tRNA pseudouridine synthase B from Nostoc sp. (strain PCC 7120 / SAG 25.82 / UTEX 2576).